The following is a 210-amino-acid chain: Imidazoleglycerol-phosphate dehydratase (210 aa).

The protein belongs to the imidazoleglycerol-phosphate dehydratase family.

It catalyses the reaction D-erythro-1-(imidazol-4-yl)glycerol 3-phosphate = 3-(imidazol-4-yl)-2-oxopropyl phosphate + H2O. The protein operates within amino-acid biosynthesis; L-histidine biosynthesis; L-histidine from 5-phospho-alpha-D-ribose 1-diphosphate: step 6/9. This chain is Imidazoleglycerol-phosphate dehydratase (HIS3), found in Candida glabrata (strain ATCC 2001 / BCRC 20586 / JCM 3761 / NBRC 0622 / NRRL Y-65 / CBS 138) (Yeast).